A 648-amino-acid chain; its full sequence is Biosynthetic arginine decarboxylase (648 aa).

The residue at position 109 (lysine 109) is an N6-(pyridoxal phosphate)lysine. Position 291–301 (291–301 (IDVGGGLGIDF)) interacts with substrate.

The protein belongs to the Orn/Lys/Arg decarboxylase class-II family. SpeA subfamily. Requires Mg(2+) as cofactor. Pyridoxal 5'-phosphate serves as cofactor.

The catalysed reaction is L-arginine + H(+) = agmatine + CO2. Its pathway is amine and polyamine biosynthesis; agmatine biosynthesis; agmatine from L-arginine: step 1/1. Functionally, catalyzes the biosynthesis of agmatine from arginine. The polypeptide is Biosynthetic arginine decarboxylase (Prochlorococcus marinus (strain MIT 9312)).